The sequence spans 413 residues: Methylaspartate ammonia-lyase (413 aa).

Gln-172 is a binding site for (2S,3S)-3-methyl-L-aspartate. Residues Asp-238, Glu-273, and Asp-307 each coordinate Mg(2+). Gln-329 lines the (2S,3S)-3-methyl-L-aspartate pocket. The Proton acceptor role is filled by Lys-331. Residues 360–361 and Cys-361 each bind (2S,3S)-3-methyl-L-aspartate; that span reads TC.

Belongs to the methylaspartate ammonia-lyase family. As to quaternary structure, homodimer. Mg(2+) is required as a cofactor.

It catalyses the reaction (2S,3S)-3-methyl-L-aspartate = mesaconate + NH4(+). The protein operates within amino-acid degradation; L-glutamate degradation via mesaconate pathway; acetate and pyruvate from L-glutamate: step 2/4. Its activity is regulated as follows. Inhibited by calcium ions. Its function is as follows. Involved in the methylaspartate cycle. Catalyzes the formation of the alpha,beta-unsaturated bond by the reversible anti elimination of ammonia from L-threo-beta-methylaspartate (L-threo-(2S,3S)-3-methylaspartate) to give mesaconate. It can also use L-erythro-beta-methylaspartate (L-erythro-(2S,3R)-3-methylaspartate), L-aspartate, fumarate and ethylfumarate as substrates. The protein is Methylaspartate ammonia-lyase of Clostridium tetanomorphum.